The sequence spans 1028 residues: Contactin-6 (1028 aa).

Positions 1–19 (MRLLWKLVILLPLINSSAG) are cleaved as a signal peptide. Ig-like C2-type domains lie at 26–117 (PIFT…AKLQ), 122–208 (EDFE…RSVQ), 227–308 (PKIE…RNLA), 318–402 (PEWE…AELR), 408–495 (PDFS…GSLI), and 499–587 (RTVI…ESLS). 6 disulfide bridges follow: Cys-50–Cys-100, Cys-144–Cys-196, Cys-249–Cys-297, Cys-339–Cys-386, Cys-431–Cys-479, and Cys-521–Cys-577. 2 N-linked (GlcNAc...) asparagine glycosylation sites follow: Asn-65 and Asn-193. N-linked (GlcNAc...) asparagine glycosylation is found at Asn-368, Asn-377, and Asn-468. 4 Fibronectin type-III domains span residues 600–698 (PPED…TKAS), 703–800 (APVN…SGED), 805–901 (APRG…TKKS), and 902–996 (PPSQ…KMSS). 4 N-linked (GlcNAc...) asparagine glycosylation sites follow: Asn-659, Asn-765, Asn-860, and Asn-865. A Phosphotyrosine modification is found at Tyr-882. A compositionally biased stretch (polar residues) spans 887-902 (TGPSSPPVNVTTKKSP). Positions 887-908 (TGPSSPPVNVTTKKSPPSQPPA) are disordered. 4 N-linked (GlcNAc...) asparagine glycosylation sites follow: Asn-895, Asn-931, Asn-956, and Asn-957. Ser-999 is lipidated: GPI-anchor amidated serine. The propeptide at 1000-1028 (RGIQFLEPSTHFLSIVIVIFHCFAIQPLI) is removed in mature form.

This sequence belongs to the immunoglobulin superfamily. Contactin family. Interacts with PTPRG. As to expression, expressed in nervous system. Highly expressed in cerebellum. Expressed at intermediate level in thalamus, subthalamic nucleus. Weakly expressed in corpus callosum, caudate nucleus and spinal cord.

Its subcellular location is the cell membrane. Its function is as follows. Contactins mediate cell surface interactions during nervous system development. Participates in oligodendrocytes generation by acting as a ligand of NOTCH1. Its association with NOTCH1 promotes NOTCH1 activation through the released notch intracellular domain (NICD) and subsequent translocation to the nucleus. Involved in motor coordination. In Homo sapiens (Human), this protein is Contactin-6 (CNTN6).